The primary structure comprises 288 residues: NADPH-dependent aldehyde reductase 1, chloroplastic (288 aa).

A compositionally biased stretch (basic and acidic residues) spans 1–18 (MASEKQKQHAQPGKEHVM). The disordered stretch occupies residues 1–32 (MASEKQKQHAQPGKEHVMESSPQFSSSDYQPS). Over residues 20–32 (SSPQFSSSDYQPS) the composition is skewed to polar residues. 47–71 (SGIGRAVGYCFASEGATVAFTYVKG) provides a ligand contact to NADP(+). Ser179 lines the substrate pocket. Tyr192 functions as the Proton acceptor in the catalytic mechanism.

It belongs to the short-chain dehydrogenases/reductases (SDR) family.

The protein localises to the plastid. It localises to the chloroplast. Its function is as follows. Aldehyde reductase that catalyzes the reduction of the aldehyde carbonyl groups on saturated and alpha,beta-unsaturated aldehydes with more than 5 carbons. No activity on alpha,beta-unsaturated ketones. Can use propionaldehyde, butyraldehyde, methylglyoxal, (e)-2-pentenal, (E)-2-hexenal, (Z)-3-hexenal and (E)-2-nonenal as substrates, but not propenal (acrolein), crotonaldehyde, 2-butanone, 3-buten-2-one or 1-penten-3-one. May act as a short alcohol-polyol-sugar dehydrogenase possibly related to carbohydrate metabolism and the acquisition of desiccation tolerance. May also be involved in signal transduction. This is NADPH-dependent aldehyde reductase 1, chloroplastic from Arabidopsis thaliana (Mouse-ear cress).